Consider the following 463-residue polypeptide: Nuclear hormone receptor family member nhr-3 (463 aa).

The segment at residues 50–125 (STICSVCCDE…VGMEPDAIRP (76 aa)) is a DNA-binding region (nuclear receptor). NR C4-type zinc fingers lie at residues 53 to 73 (CSVC…CFGC) and 89 to 113 (CRYS…FQKC). Over residues 121–131 (DAIRPDRDKTG) the composition is skewed to basic and acidic residues. Residues 121 to 143 (DAIRPDRDKTGRQKNPRRNTEGS) form a disordered region. The NR LBD domain occupies 199–462 (EIENIVIQLQ…VLEELLFLDR (264 aa)).

It belongs to the nuclear hormone receptor family.

The protein localises to the nucleus. Functionally, orphan nuclear receptor. The protein is Nuclear hormone receptor family member nhr-3 (nhr-3) of Caenorhabditis elegans.